The primary structure comprises 108 residues: Large ribosomal subunit protein uL24 (108 aa).

It belongs to the universal ribosomal protein uL24 family. As to quaternary structure, part of the 50S ribosomal subunit.

Its function is as follows. One of two assembly initiator proteins, it binds directly to the 5'-end of the 23S rRNA, where it nucleates assembly of the 50S subunit. Functionally, one of the proteins that surrounds the polypeptide exit tunnel on the outside of the subunit. This is Large ribosomal subunit protein uL24 from Mycoplasmopsis synoviae (strain 53) (Mycoplasma synoviae).